The primary structure comprises 211 residues: ATP phosphoribosyltransferase (211 aa).

Belongs to the ATP phosphoribosyltransferase family. Short subfamily. In terms of assembly, heteromultimer composed of HisG and HisZ subunits.

Its subcellular location is the cytoplasm. The enzyme catalyses 1-(5-phospho-beta-D-ribosyl)-ATP + diphosphate = 5-phospho-alpha-D-ribose 1-diphosphate + ATP. It functions in the pathway amino-acid biosynthesis; L-histidine biosynthesis; L-histidine from 5-phospho-alpha-D-ribose 1-diphosphate: step 1/9. In terms of biological role, catalyzes the condensation of ATP and 5-phosphoribose 1-diphosphate to form N'-(5'-phosphoribosyl)-ATP (PR-ATP). Has a crucial role in the pathway because the rate of histidine biosynthesis seems to be controlled primarily by regulation of HisG enzymatic activity. In Bacillus cereus (strain ATCC 10987 / NRS 248), this protein is ATP phosphoribosyltransferase.